We begin with the raw amino-acid sequence, 172 residues long: Peptide methionine sulfoxide reductase MsrA (172 aa).

Cysteine 14 is an active-site residue.

It belongs to the MsrA Met sulfoxide reductase family.

The enzyme catalyses L-methionyl-[protein] + [thioredoxin]-disulfide + H2O = L-methionyl-(S)-S-oxide-[protein] + [thioredoxin]-dithiol. It carries out the reaction [thioredoxin]-disulfide + L-methionine + H2O = L-methionine (S)-S-oxide + [thioredoxin]-dithiol. Functionally, has an important function as a repair enzyme for proteins that have been inactivated by oxidation. Catalyzes the reversible oxidation-reduction of methionine sulfoxide in proteins to methionine. The sequence is that of Peptide methionine sulfoxide reductase MsrA from Streptomyces coelicolor (strain ATCC BAA-471 / A3(2) / M145).